We begin with the raw amino-acid sequence, 330 residues long: Dimethyladenosine transferase 1, mitochondrial (330 aa).

The transit peptide at 1-84 (MAQPSARVLQ…RSILRRHPQR (84 aa)) directs the protein to the mitochondrion. S-adenosyl-L-methionine is bound by residues 38 to 41 (QNFL), Asn-39, Leu-41, Gly-67, Glu-89, Asp-118, and Asn-140.

This sequence belongs to the class I-like SAM-binding methyltransferase superfamily. rRNA adenine N(6)-methyltransferase family. KsgA subfamily.

The protein localises to the mitochondrion. Functionally, probable S-adenosyl-L-methionine-dependent methyltransferase which specifically dimethylates mitochondrial 12S rRNA at the conserved stem loop. In contrast to mtTFB2, it does not have a critical role in either transcription or regulation of the copy number of mitochondrial DNA. The chain is Dimethyladenosine transferase 1, mitochondrial (mtTFB1) from Drosophila melanogaster (Fruit fly).